The primary structure comprises 473 residues: MSKPVITRFAPSPTGYLHIGGARTALFNWLYAKHCGGKMLLRIEDTDRERSTEAATAAILDGLTWLGLDWDGEAISQFERAPRHREVAEELVANGKAYYCYASPEELEEMREKARAEGRPPRYDGRWRDRDPSEAPAGVKPVIRIKAPRDGETVVHDAVQGDVRFPNKDLDDFIILRSDGTPTYMHAVVVDDHDMGVTHIIRGDDHLTNAARQTIIYNAMGWDVPQMSHIPLIHGADGAKLSKRHGALGVDAYRAIGYLPAALRNYLVRLGWSHGDDEIMSTEQMIEWFDVKDINKGAARFDFQKLEAINGLYMRSSDDQALFDALVAVLPEIEGGKELAEALDDKGRAQLLLAMPGLKERAKTLVELADGAKFIFASRPLALDEKAASLLNDEGRAVLKPVYPVLEAVGEWTAESLDAAIRAHAEAEGLKLGKIAQPLRAALTGRATSPGVFDVLVVLGREESLARIGDQIG.

The 'HIGH' region signature appears at Pro-11–Gly-21. Residues Lys-113 to Ser-133 show a composition bias toward basic and acidic residues. The disordered stretch occupies residues Lys-113–Pro-136. The 'KMSKS' region motif lies at Lys-240–Arg-244. Lys-243 is a binding site for ATP.

Belongs to the class-I aminoacyl-tRNA synthetase family. Glutamate--tRNA ligase type 1 subfamily. Monomer.

The protein localises to the cytoplasm. It catalyses the reaction tRNA(Glu) + L-glutamate + ATP = L-glutamyl-tRNA(Glu) + AMP + diphosphate. Catalyzes the attachment of glutamate to tRNA(Glu) in a two-step reaction: glutamate is first activated by ATP to form Glu-AMP and then transferred to the acceptor end of tRNA(Glu). This is Glutamate--tRNA ligase 2 from Brucella abortus (strain S19).